A 55-amino-acid polypeptide reads, in one-letter code: Large ribosomal subunit protein bL33 (55 aa).

The protein belongs to the bacterial ribosomal protein bL33 family.

In Aliivibrio fischeri (strain ATCC 700601 / ES114) (Vibrio fischeri), this protein is Large ribosomal subunit protein bL33.